Reading from the N-terminus, the 105-residue chain is Small ribosomal subunit protein uS17 (105 aa).

This sequence belongs to the universal ribosomal protein uS17 family. In terms of assembly, part of the 30S ribosomal subunit. Contacts protein S12.

Its function is as follows. One of the primary rRNA binding proteins, it binds directly to 16S rRNA where it helps nucleate assembly of the platform and body of the 30S subunit by bringing together and stabilizing interactions between several different RNA helices. The combined cluster of proteins S8, S12 and S17 appears to hold together the shoulder and platform of the 30S subunit. In Thermus thermophilus (strain ATCC 27634 / DSM 579 / HB8), this protein is Small ribosomal subunit protein uS17.